A 307-amino-acid polypeptide reads, in one-letter code: Ornithine carbamoyltransferase (307 aa).

Carbamoyl phosphate-binding positions include 56 to 59 (STRT), Gln-83, Arg-107, and 134 to 137 (HPCQ). Residues Asn-165, Asp-223, and 227-228 (SM) each bind L-ornithine. Carbamoyl phosphate-binding positions include 263-264 (CL) and Arg-291.

The protein belongs to the aspartate/ornithine carbamoyltransferase superfamily. OTCase family.

Its subcellular location is the cytoplasm. It carries out the reaction carbamoyl phosphate + L-ornithine = L-citrulline + phosphate + H(+). The protein operates within amino-acid degradation; L-arginine degradation via ADI pathway; carbamoyl phosphate from L-arginine: step 2/2. In terms of biological role, reversibly catalyzes the transfer of the carbamoyl group from carbamoyl phosphate (CP) to the N(epsilon) atom of ornithine (ORN) to produce L-citrulline. This Cupriavidus taiwanensis (strain DSM 17343 / BCRC 17206 / CCUG 44338 / CIP 107171 / LMG 19424 / R1) (Ralstonia taiwanensis (strain LMG 19424)) protein is Ornithine carbamoyltransferase.